The following is a 54-amino-acid chain: Anti-adapter protein SpxO (54 aa).

In terms of assembly, interacts with SpxH.

Its function is as follows. Inhibitor of Spx proteolytic control. Acts by interacting with SpxH/YjbH, which disrupts interaction between SpxH and Spx, and inhibits SpxH-enhanced proteolysis of Spx by ClpXP. Required for the stabilization of Spx and activation of Spx-regulated genes in response to cell wall stress. The chain is Anti-adapter protein SpxO from Bacillus subtilis (strain 168).